The sequence spans 406 residues: Phosphopentomutase (406 aa).

Mn(2+) is bound by residues Asp-10, Asp-305, His-310, Asp-346, His-347, and His-358.

The protein belongs to the phosphopentomutase family. Mn(2+) is required as a cofactor.

The protein localises to the cytoplasm. It catalyses the reaction 2-deoxy-alpha-D-ribose 1-phosphate = 2-deoxy-D-ribose 5-phosphate. The enzyme catalyses alpha-D-ribose 1-phosphate = D-ribose 5-phosphate. It participates in carbohydrate degradation; 2-deoxy-D-ribose 1-phosphate degradation; D-glyceraldehyde 3-phosphate and acetaldehyde from 2-deoxy-alpha-D-ribose 1-phosphate: step 1/2. Isomerase that catalyzes the conversion of deoxy-ribose 1-phosphate (dRib-1-P) and ribose 1-phosphate (Rib-1-P) to deoxy-ribose 5-phosphate (dRib-5-P) and ribose 5-phosphate (Rib-5-P), respectively. The polypeptide is Phosphopentomutase (Rhizobium johnstonii (strain DSM 114642 / LMG 32736 / 3841) (Rhizobium leguminosarum bv. viciae)).